We begin with the raw amino-acid sequence, 422 residues long: Dihydroorotase (422 aa).

H59 and H61 together coordinate Zn(2+). Residues 61–63 (HFR) and N93 each bind substrate. Residues D150, H177, and H230 each coordinate Zn(2+). N276 contacts substrate. D303 provides a ligand contact to Zn(2+). D303 is a catalytic residue. H307 serves as a coordination point for substrate.

This sequence belongs to the metallo-dependent hydrolases superfamily. DHOase family. Class I DHOase subfamily. Zn(2+) serves as cofactor.

It catalyses the reaction (S)-dihydroorotate + H2O = N-carbamoyl-L-aspartate + H(+). The protein operates within pyrimidine metabolism; UMP biosynthesis via de novo pathway; (S)-dihydroorotate from bicarbonate: step 3/3. Functionally, catalyzes the reversible cyclization of carbamoyl aspartate to dihydroorotate. In Streptococcus pyogenes serotype M1, this protein is Dihydroorotase.